The primary structure comprises 225 residues: MDIVFALGGSVLMPKDGASAENIKSYAQVFKKLKDMGHNVSIVVGGGNTAREYIKVSREFTNESVCDEIGIMATRMNAMLLISALSKYSVNFVPTNFKDAEMILNLGKILVMGGTHPAHTTDAVSATLAEFTNADLLVIATNVDGVYTKDPRTNNDAKKLEKMTTKELIEITGSNSISAGSSSVVDSLASKIIDRAKLKTIVVKGTPDEILKSVLGGHDGTIIIP.

Residue 9-10 (GS) participates in ATP binding. Glycine 46 provides a ligand contact to UMP. Residues glycine 47 and arginine 51 each contribute to the ATP site. Residues aspartate 67 and 115 to 121 (THPAHTT) each bind UMP. Threonine 141, asparagine 142, tyrosine 147, and aspartate 150 together coordinate ATP.

The protein belongs to the UMP kinase family. In terms of assembly, homohexamer.

It is found in the cytoplasm. The enzyme catalyses UMP + ATP = UDP + ADP. The protein operates within pyrimidine metabolism; CTP biosynthesis via de novo pathway; UDP from UMP (UMPK route): step 1/1. Its activity is regulated as follows. Inhibited by UTP. Its function is as follows. Catalyzes the reversible phosphorylation of UMP to UDP. This chain is Uridylate kinase, found in Methanococcus vannielii (strain ATCC 35089 / DSM 1224 / JCM 13029 / OCM 148 / SB).